A 511-amino-acid chain; its full sequence is Xylose import ATP-binding protein XylG (511 aa).

ABC transporter domains are found at residues 6 to 244 and 261 to 506; these read LEMR…VGRE and FEAR…IGKP. 38–45 lines the ATP pocket; it reads GENGAGKS.

The protein belongs to the ABC transporter superfamily. Xylose importer (TC 3.A.1.2.4) family. As to quaternary structure, the complex is composed of two ATP-binding proteins (XylG), two transmembrane proteins (XylH) and a solute-binding protein (XylF).

The protein localises to the cell inner membrane. It catalyses the reaction D-xylose(out) + ATP + H2O = D-xylose(in) + ADP + phosphate + H(+). Its function is as follows. Part of the ABC transporter complex XylFGH involved in xylose import. Responsible for energy coupling to the transport system. This Brucella suis biovar 1 (strain 1330) protein is Xylose import ATP-binding protein XylG.